The chain runs to 270 residues: Phosphatidylglycerol--prolipoprotein diacylglyceryl transferase (270 aa).

4 helical membrane passes run Phe-19–Ala-39, Leu-56–Glu-76, Gln-92–Ala-112, and Gly-116–Ile-136. Arg-138 contributes to the a 1,2-diacyl-sn-glycero-3-phospho-(1'-sn-glycerol) binding site. 3 helical membrane-spanning segments follow: residues His-178 to Leu-198, Gly-206 to Leu-226, and Leu-236 to Val-256.

It belongs to the Lgt family.

It is found in the cell membrane. The catalysed reaction is L-cysteinyl-[prolipoprotein] + a 1,2-diacyl-sn-glycero-3-phospho-(1'-sn-glycerol) = an S-1,2-diacyl-sn-glyceryl-L-cysteinyl-[prolipoprotein] + sn-glycerol 1-phosphate + H(+). Its pathway is protein modification; lipoprotein biosynthesis (diacylglyceryl transfer). Catalyzes the transfer of the diacylglyceryl group from phosphatidylglycerol to the sulfhydryl group of the N-terminal cysteine of a prolipoprotein, the first step in the formation of mature lipoproteins. This Bacillus cereus (strain G9842) protein is Phosphatidylglycerol--prolipoprotein diacylglyceryl transferase.